Consider the following 280-residue polypeptide: Divalent cation/proton antiporter GDT1 (280 aa).

Residues 1 to 3 lie on the Cytoplasmic side of the membrane; that stretch reads MGN. The chain crosses the membrane as a helical span at residues 4-24; sequence MIKKASLIALLPLFTAAAAAA. At 25 to 45 the chain is on the vacuolar side; the sequence is TDAETSMESGSSSHLKSFLMS. Residues 46–66 form a helical membrane-spanning segment; the sequence is VSMIGLSEIGDKTFLIAALMA. Topologically, residues 67–71 are cytoplasmic; sequence MRHKR. The chain crosses the membrane as a helical span at residues 72 to 92; sequence VLVFSAAATSLAIMTILSGVV. Over 93–104 the chain is Vacuolar; that stretch reads GHSAVAFLSERY. The helical transmembrane segment at 105-125 threads the bilayer; that stretch reads TAFFAGILFLVFGYKLTMEGL. The Cytoplasmic segment spans residues 126-183; sequence EMSKDAGVEEEMAEVEEEIAIKDMNQDMDDVEKGGDTAYDKQLKNASIGKKIVHRIRE. A helical transmembrane segment spans residues 184–204; the sequence is LASFMFSPVWVQIFLMVFLGE. The Vacuolar portion of the chain corresponds to 205-222; it reads LGDRSQISIIAMATDSDY. The chain crosses the membrane as a helical span at residues 223–243; it reads WYVIAGAVIGHAICSGLAVVG. The Cytoplasmic portion of the chain corresponds to 244-255; it reads GKLLATRISIRT. A helical membrane pass occupies residues 256-276; sequence ITLASSLLFFIFALMYIYQAF. The Vacuolar segment spans residues 277–280; it reads TTQD.

The protein belongs to the GDT1 family.

The protein resides in the golgi apparatus. Its subcellular location is the cis-Golgi network membrane. The enzyme catalyses Ca(2+)(in) + n H(+)(out) = Ca(2+)(out) + n H(+)(in). The catalysed reaction is Mn(2+)(in) + n H(+)(out) = Mn(2+)(out) + n H(+)(in). Divalent cation:proton antiporter that exchanges calcium or manganese ions for protons across the Golgi membrane. Mediates the reversible transport of calcium or manganese to the Golgi lumen driven by the proton gradient and possibly the membrane potential generated by V-ATPase. Provides calcium or manganese cofactors to resident Golgi enzymes and contributes to the maintenance of an acidic luminal Golgi pH required for proper functioning of the secretory pathway. The transport stoichiometry remains to be elucidated. In Saccharomyces cerevisiae (strain ATCC 204508 / S288c) (Baker's yeast), this protein is Divalent cation/proton antiporter GDT1.